The chain runs to 351 residues: Pinopsin (351 aa).

Over 1–30 (MSSNSSQAPPNGTPGPFDGPQWPYQAPQST) the chain is Extracellular. N-linked (GlcNAc...) asparagine glycosylation occurs at Asn4. The chain crosses the membrane as a helical span at residues 31-55 (YVGVAVLMGTVVACASVVNGLVIVV). The Cytoplasmic segment spans residues 56-67 (SICYKKLRSPLN). A helical membrane pass occupies residues 68–92 (YILVNLAVADLLVTLCGSSVSLSNN). At 93-107 (INGFFVFGRRMCELE) the chain is on the extracellular side. A disulfide bridge links Cys104 with Cys181. Residues 108–127 (GFMVSLTGIVGLWSLAILAL) form a helical membrane-spanning segment. The Cytoplasmic segment spans residues 128–146 (ERYVVVCKPLGDFQFQRRH). A helical membrane pass occupies residues 147 to 170 (AVSGCAFTWGWALLWSAPPLLGWS). Residues 171-194 (SYVPEGLRTSCGPNWYTGGSNNNS) lie on the Extracellular side of the membrane. N-linked (GlcNAc...) asparagine glycosylation is present at Asn192. The chain crosses the membrane as a helical span at residues 195–222 (YILSLFVTCFVLPLSLILFSYTNLLLTL). Residues 223–244 (RAAAAQQKEADTTQRAEREVTR) lie on the Cytoplasmic side of the membrane. A helical membrane pass occupies residues 245–268 (MVIVMVMAFLLCWLPYSTFALVVA). The Extracellular portion of the chain corresponds to 269–276 (THKGIIIQ). Residues 277–301 (PVLASLPSYFSKTATVYNPIIYVFM) traverse the membrane as a helical segment. Lys288 is modified (N6-(retinylidene)lysine). Residues 302–351 (NKQFQSCLLEMLCCGYQPQRTGKASPGTPGPHADVTAAGLRNKVMPAHPV) lie on the Cytoplasmic side of the membrane. 2 S-palmitoyl cysteine lipidation sites follow: Cys314 and Cys315.

The protein belongs to the G-protein coupled receptor 1 family. Opsin subfamily. Phosphorylated on some or all of the serine and threonine residues present in the C-terminal region. In terms of tissue distribution, pineal gland.

It localises to the membrane. Its function is as follows. Produces a slow and prolonged phototransduction response consistent with the non-visual function of pineal photoreception. This Gallus gallus (Chicken) protein is Pinopsin.